A 76-amino-acid chain; its full sequence is UPF0248 protein MmarC7_1289 (76 aa).

Belongs to the UPF0248 family.

This chain is UPF0248 protein MmarC7_1289, found in Methanococcus maripaludis (strain C7 / ATCC BAA-1331).